The following is a 332-amino-acid chain: MKPTMMSNWPGFINRFVRQVRHPLDFRRPYRITGFPDNLSPLGYFGQTKQYARAAQEPYLVTVVQGRSKKPCSPRERANRRFGEDSWFVSSTPRAEVLGVADGVGGWRDMGVDAGRFAKELMGCCCGRSEQEDFDGRNPRSLLVSSYQELKDRDDPVVGSSTACVVAMHRRDLTLYTANLGDSGFMVLRNGRVMHRSEEQTHDFNTPFQLTVAPSHKLDSVHCDGPEKAAVSRHPLAPGDLVLLATDGLFDNLPESMLLEMLRKFHGVRDEKELQDAANQVVEKARELSMNASFPSPFAVKARANNISYSGGGKPDDITLILASVEVPKVHR.

The region spanning 70 to 325 (KPCSPRERAN…DDITLILASV (256 aa)) is the PPM-type phosphatase domain. Residues Asp-102, Gly-103, and Asp-247 each coordinate Mn(2+).

This sequence belongs to the PP2C family. It depends on Mg(2+) as a cofactor. The cofactor is Mn(2+).

The enzyme catalyses O-phospho-L-seryl-[protein] + H2O = L-seryl-[protein] + phosphate. It carries out the reaction O-phospho-L-threonyl-[protein] + H2O = L-threonyl-[protein] + phosphate. This is Protein phosphatase PTC7 homolog fig from Drosophila ananassae (Fruit fly).